Consider the following 791-residue polypeptide: Valine--tRNA ligase (791 aa).

The 'HIGH' region motif lies at 40–50; sequence PTVSGKMHMGH. A 'KMSKS' region motif is present at residues 521-525; that stretch reads KMSKS. Lys-524 serves as a coordination point for ATP.

It belongs to the class-I aminoacyl-tRNA synthetase family. ValS type 2 subfamily.

It is found in the cytoplasm. It catalyses the reaction tRNA(Val) + L-valine + ATP = L-valyl-tRNA(Val) + AMP + diphosphate. Its function is as follows. Catalyzes the attachment of valine to tRNA(Val). As ValRS can inadvertently accommodate and process structurally similar amino acids such as threonine, to avoid such errors, it has a 'posttransfer' editing activity that hydrolyzes mischarged Thr-tRNA(Val) in a tRNA-dependent manner. This is Valine--tRNA ligase from Thermoplasma acidophilum (strain ATCC 25905 / DSM 1728 / JCM 9062 / NBRC 15155 / AMRC-C165).